We begin with the raw amino-acid sequence, 273 residues long: Large ribosomal subunit protein uL2 (273 aa).

2 disordered regions span residues 30–50 (YAPLLDTKSKTGGRNNFGRIT) and 221–273 (RGTA…RRGK). Basic residues predominate over residues 253-273 (KGKKTRHNKRTDKFIVRRRGK).

The protein belongs to the universal ribosomal protein uL2 family. In terms of assembly, part of the 50S ribosomal subunit. Forms a bridge to the 30S subunit in the 70S ribosome.

Its function is as follows. One of the primary rRNA binding proteins. Required for association of the 30S and 50S subunits to form the 70S ribosome, for tRNA binding and peptide bond formation. It has been suggested to have peptidyltransferase activity; this is somewhat controversial. Makes several contacts with the 16S rRNA in the 70S ribosome. The protein is Large ribosomal subunit protein uL2 of Pasteurella multocida (strain Pm70).